The sequence spans 179 residues: Tetratricopeptide repeat protein 36 (179 aa).

TPR repeat units lie at residues 43–76, 78–110, and 115–148; these read SLQL…CPKN, SAYN…AGPK, and CQAY…GSSF.

The protein belongs to the TTC36 family.

This is Tetratricopeptide repeat protein 36 from Caenorhabditis elegans.